Consider the following 142-residue polypeptide: ATP synthase epsilon chain (142 aa).

It belongs to the ATPase epsilon chain family. In terms of assembly, F-type ATPases have 2 components, CF(1) - the catalytic core - and CF(0) - the membrane proton channel. CF(1) has five subunits: alpha(3), beta(3), gamma(1), delta(1), epsilon(1). CF(0) has three main subunits: a, b and c.

Its subcellular location is the cell inner membrane. Produces ATP from ADP in the presence of a proton gradient across the membrane. In Shewanella sp. (strain ANA-3), this protein is ATP synthase epsilon chain.